The following is a 334-amino-acid chain: Glucokinase-like protein XF_1460 (334 aa).

ATP is bound at residue 18–23; that stretch reads ADVGGT.

This sequence belongs to the bacterial glucokinase family.

The protein is Glucokinase-like protein XF_1460 of Xylella fastidiosa (strain 9a5c).